The primary structure comprises 363 residues: Peptide chain release factor 1 (363 aa).

Gln-236 is modified (N5-methylglutamine). The disordered stretch occupies residues 286 to 305; the sequence is KKEMERSTMRKSQIGSGDRS.

It belongs to the prokaryotic/mitochondrial release factor family. Methylated by PrmC. Methylation increases the termination efficiency of RF1.

It localises to the cytoplasm. Functionally, peptide chain release factor 1 directs the termination of translation in response to the peptide chain termination codons UAG and UAA. The sequence is that of Peptide chain release factor 1 from Wolbachia pipientis subsp. Culex pipiens (strain wPip).